The primary structure comprises 292 residues: ATP synthase gamma chain (292 aa).

It belongs to the ATPase gamma chain family. In terms of assembly, F-type ATPases have 2 components, CF(1) - the catalytic core - and CF(0) - the membrane proton channel. CF(1) has five subunits: alpha(3), beta(3), gamma(1), delta(1), epsilon(1). CF(0) has three main subunits: a, b and c.

It localises to the cell inner membrane. Functionally, produces ATP from ADP in the presence of a proton gradient across the membrane. The gamma chain is believed to be important in regulating ATPase activity and the flow of protons through the CF(0) complex. The protein is ATP synthase gamma chain of Nautilia profundicola (strain ATCC BAA-1463 / DSM 18972 / AmH).